The sequence spans 318 residues: Transaldolase (318 aa).

Lysine 132 acts as the Schiff-base intermediate with substrate in catalysis.

The protein belongs to the transaldolase family. Type 1 subfamily. In terms of assembly, homodimer.

It localises to the cytoplasm. It catalyses the reaction D-sedoheptulose 7-phosphate + D-glyceraldehyde 3-phosphate = D-erythrose 4-phosphate + beta-D-fructose 6-phosphate. It participates in carbohydrate degradation; pentose phosphate pathway; D-glyceraldehyde 3-phosphate and beta-D-fructose 6-phosphate from D-ribose 5-phosphate and D-xylulose 5-phosphate (non-oxidative stage): step 2/3. Functionally, transaldolase is important for the balance of metabolites in the pentose-phosphate pathway. This Shewanella pealeana (strain ATCC 700345 / ANG-SQ1) protein is Transaldolase.